We begin with the raw amino-acid sequence, 130 residues long: Small ribosomal subunit protein bS6 (130 aa).

Residues 100–130 (SPMVKAKDERRERREDFAEAGDDVEAGDSEE) are disordered. Over residues 104–116 (KAKDERRERREDF) the composition is skewed to basic and acidic residues. Over residues 117 to 130 (AEAGDDVEAGDSEE) the composition is skewed to acidic residues.

It belongs to the bacterial ribosomal protein bS6 family.

Binds together with bS18 to 16S ribosomal RNA. The sequence is that of Small ribosomal subunit protein bS6 from Pectobacterium atrosepticum (strain SCRI 1043 / ATCC BAA-672) (Erwinia carotovora subsp. atroseptica).